The sequence spans 174 residues: MPKLWDAVAGFAVTFGTLFKKPITEEYPEKPGPVAPRYHGRHQLNRYPDGLEKCIGCELCAWACPADAIYVEGDDNTADERYSPGERYGRVYQINYLRCIGCGLCIEACPTRALTMTNDYEMADDNRADLIWGKDKLLAPLQDGMLAPPHPMAPGATDDDYYLGRIGPATEDVR.

4Fe-4S ferredoxin-type domains follow at residues 44-74 and 90-119; these read LNRY…VEGD and RVYQ…MTND. [4Fe-4S] cluster is bound by residues Cys-54, Cys-57, Cys-60, Cys-64, Cys-99, Cys-102, Cys-105, and Cys-109.

This sequence belongs to the complex I 23 kDa subunit family. NDH-1 is composed of 14 different subunits. Subunits NuoA, H, J, K, L, M, N constitute the membrane sector of the complex. Requires [4Fe-4S] cluster as cofactor.

It is found in the cell membrane. The enzyme catalyses a quinone + NADH + 5 H(+)(in) = a quinol + NAD(+) + 4 H(+)(out). Functionally, NDH-1 shuttles electrons from NADH, via FMN and iron-sulfur (Fe-S) centers, to quinones in the respiratory chain. The immediate electron acceptor for the enzyme in this species is believed to be menaquinone. Couples the redox reaction to proton translocation (for every two electrons transferred, four hydrogen ions are translocated across the cytoplasmic membrane), and thus conserves the redox energy in a proton gradient. The sequence is that of NADH-quinone oxidoreductase subunit I from Mycobacterium sp. (strain KMS).